A 431-amino-acid chain; its full sequence is Peroxisomal biogenesis factor 3 (431 aa).

The Peroxisomal segment spans residues Met-1 to Lys-10. Residues Val-11–Val-28 traverse the membrane as a helical segment. The Cytoplasmic portion of the chain corresponds to Lys-29–Leu-431. The segment at Thr-95 to Glu-126 is disordered. Residues Gln-112 to Ala-121 show a composition bias toward polar residues.

Belongs to the peroxin-3 family.

It localises to the peroxisome membrane. In terms of biological role, involved in peroxisome biosynthesis. Seems to directly or indirectly sequesters components of the peroxisome biogenesis machinery. In Yarrowia lipolytica (strain CLIB 122 / E 150) (Yeast), this protein is Peroxisomal biogenesis factor 3 (PEX3).